The chain runs to 987 residues: ATP-dependent 6-phosphofructokinase subunit alpha (987 aa).

The segment at 1-602 (MPSSSDAINR…DYRYFRDISI (602 aa)) is N-terminal catalytic PFK domain 1. Residues glycine 237, 300 to 301 (RC), and 330 to 333 (GDGS) each bind ATP. Aspartate 331 serves as a coordination point for Mg(2+). Beta-D-fructose 6-phosphate-binding positions include 376–378 (SID), arginine 413, 420–422 (MGR), glutamate 477, arginine 504, and 510–513 (HVQR). The active-site Proton acceptor is the aspartate 378. The interval 603–616 (YDDGSKQLSEDKRL) is interdomain linker. Residues 617-987 (NIAIVHVGAA…KSLLKKQERY (371 aa)) are C-terminal regulatory PFK domain 2. Residues arginine 686, 743-747 (TVSNN), arginine 781, 788-790 (QGG), glutamate 848, arginine 874, 880-883 (HVQQ), and arginine 958 contribute to the beta-D-fructose 2,6-bisphosphate site.

Belongs to the phosphofructokinase type A (PFKA) family. ATP-dependent PFK group I subfamily. Eukaryotic two domain clade 'E' sub-subfamily. Heterooctamer of 4 alpha and 4 beta chains. The cofactor is Mg(2+).

Its subcellular location is the cytoplasm. It catalyses the reaction beta-D-fructose 6-phosphate + ATP = beta-D-fructose 1,6-bisphosphate + ADP + H(+). It participates in carbohydrate degradation; glycolysis; D-glyceraldehyde 3-phosphate and glycerone phosphate from D-glucose: step 3/4. Allosterically activated by ADP, AMP, or fructose 2,6-bisphosphate, and allosterically inhibited by ATP or citrate. Its function is as follows. Catalyzes the phosphorylation of D-fructose 6-phosphate to fructose 1,6-bisphosphate by ATP, the first committing step of glycolysis. The protein is ATP-dependent 6-phosphofructokinase subunit alpha (PFK1) of Candida albicans (Yeast).